The sequence spans 206 residues: Small ribosomal subunit protein uS4 (206 aa).

The region spanning 96–156 (CRLDNVVYRM…EKSSNQLRIV (61 aa)) is the S4 RNA-binding domain.

Belongs to the universal ribosomal protein uS4 family. As to quaternary structure, part of the 30S ribosomal subunit. Contacts protein S5. The interaction surface between S4 and S5 is involved in control of translational fidelity.

Its function is as follows. One of the primary rRNA binding proteins, it binds directly to 16S rRNA where it nucleates assembly of the body of the 30S subunit. Functionally, with S5 and S12 plays an important role in translational accuracy. The protein is Small ribosomal subunit protein uS4 of Pseudomonas putida (strain W619).